A 360-amino-acid chain; its full sequence is Protein phosphatase 1L (360 aa).

At 1–25 (MIEDTMTLLSLLGRIMRYFLLRPET) the chain is on the extracellular side. The helical transmembrane segment at 26 to 42 (LFLLCISLALWSYFFHT) threads the bilayer. Residues 43–360 (DEVKTIVKSS…FRNSSKTEEQ (318 aa)) lie on the Cytoplasmic side of the membrane. A PPM-type phosphatase domain is found at 92–351 (NVAVYSIQGR…DNITVMVVKF (260 aa)). Residues Asp-128, Gly-129, Asp-302, and Asp-342 each coordinate Mn(2+).

This sequence belongs to the PP2C family. As to quaternary structure, interacts with MAP3K7/TAK1 and MAP3K5. It depends on Mg(2+) as a cofactor. The cofactor is Mn(2+).

The protein resides in the membrane. It catalyses the reaction O-phospho-L-seryl-[protein] + H2O = L-seryl-[protein] + phosphate. It carries out the reaction O-phospho-L-threonyl-[protein] + H2O = L-threonyl-[protein] + phosphate. In terms of biological role, acts as a suppressor of the SAPK signaling pathways by associating with and dephosphorylating MAP3K7/TAK1 and MAP3K5, and by attenuating the association between MAP3K7/TAK1 and MAP2K4 or MAP2K6. In Bos taurus (Bovine), this protein is Protein phosphatase 1L (PPM1L).